Reading from the N-terminus, the 270-residue chain is tRNA pseudouridine synthase A (270 aa).

Residue aspartate 60 is the Nucleophile of the active site. Residues 107 to 111 form an RNA binding region; sequence FHARF. Tyrosine 118 is a binding site for substrate. Positions 168 to 172 are interaction with tRNA; that stretch reads QCQSR.

Belongs to the tRNA pseudouridine synthase TruA family. As to quaternary structure, homodimer.

The enzyme catalyses uridine(38/39/40) in tRNA = pseudouridine(38/39/40) in tRNA. Functionally, formation of pseudouridine at positions 38, 39 and 40 in the anticodon stem and loop of transfer RNAs. In Citrobacter koseri (strain ATCC BAA-895 / CDC 4225-83 / SGSC4696), this protein is tRNA pseudouridine synthase A.